Consider the following 31-residue polypeptide: Small protein MgtS (31 aa).

The Periplasmic portion of the chain corresponds to 1 to 4 (MLGN). The chain crosses the membrane as a helical span at residues 5–25 (MNVFMAVLGIILFSGFLAAYF). Topologically, residues 26-31 (SHKWDD) are cytoplasmic.

Interacts with MgtA.

The protein localises to the cell inner membrane. In terms of biological role, modulates intracellular Mg(2+) levels to maintain cellular integrity upon Mg(2+) limitation. Acts by binding and stabilizing the Mg(2+) transporter MgtA, thereby leading to increased intracellular level of Mg(2+). May inhibit FtsH proteolysis of MgtA. The polypeptide is Small protein MgtS (Escherichia coli (strain K12)).